A 151-amino-acid polypeptide reads, in one-letter code: Ribosome maturation factor RimP (151 aa).

Belongs to the RimP family.

It localises to the cytoplasm. Its function is as follows. Required for maturation of 30S ribosomal subunits. This chain is Ribosome maturation factor RimP, found in Thermoanaerobacter pseudethanolicus (strain ATCC 33223 / 39E) (Clostridium thermohydrosulfuricum).